We begin with the raw amino-acid sequence, 330 residues long: ADP-L-glycero-D-manno-heptose-6-epimerase (330 aa).

NADP(+) is bound by residues 11 to 12, 32 to 33, Q39, Q54, 75 to 79, and N92; these read FI, DD, and QGACA. Catalysis depends on Y139, which acts as the Proton acceptor. NADP(+) is bound at residue K143. N168 lines the substrate pocket. NADP(+)-binding residues include V169 and K177. The Proton acceptor role is filled by K177. Substrate is bound by residues R179, H186, 200–203, R213, and Y292; that span reads FGEH.

It belongs to the NAD(P)-dependent epimerase/dehydratase family. HldD subfamily. As to quaternary structure, homopentamer. Requires NADP(+) as cofactor.

The catalysed reaction is ADP-D-glycero-beta-D-manno-heptose = ADP-L-glycero-beta-D-manno-heptose. It participates in nucleotide-sugar biosynthesis; ADP-L-glycero-beta-D-manno-heptose biosynthesis; ADP-L-glycero-beta-D-manno-heptose from D-glycero-beta-D-manno-heptose 7-phosphate: step 4/4. In terms of biological role, catalyzes the interconversion between ADP-D-glycero-beta-D-manno-heptose and ADP-L-glycero-beta-D-manno-heptose via an epimerization at carbon 6 of the heptose. This is ADP-L-glycero-D-manno-heptose-6-epimerase from Pseudomonas paraeruginosa (strain DSM 24068 / PA7) (Pseudomonas aeruginosa (strain PA7)).